The sequence spans 166 residues: 3-hydroxyacyl-[acyl-carrier-protein] dehydratase, mitochondrial (166 aa).

Residues 1 to 17 (MLAKTVFPRGLLVLRSF) constitute a mitochondrion transit peptide. The region spanning 34 to 125 (ETRVFSSEDI…VQAIALRETK (92 aa)) is the MaoC-like domain.

Homodimer. Expressed in leaves, roots, siliques and flowers.

It is found in the mitochondrion. The catalysed reaction is a (3R)-hydroxyacyl-[ACP] = a (2E)-enoyl-[ACP] + H2O. It catalyses the reaction (3R)-hydroxyhexadecanoyl-[ACP] = (2E)-hexadecenoyl-[ACP] + H2O. The enzyme catalyses (3R)-hydroxydecanoyl-[ACP] = (2E)-decenoyl-[ACP] + H2O. It functions in the pathway lipid metabolism; fatty acid biosynthesis. Functionally, 3-hydroxyl-[acyl-carrier-protein] (3-hydroxyl-ACP) dehydratase required for mitochondrial fatty acid synthesis (mtFAS). MtFAS are essential for photorespiration and plant development, probably by influencing mitochondrial membrane lipid composition and other lipid metabolic pathways. The polypeptide is 3-hydroxyacyl-[acyl-carrier-protein] dehydratase, mitochondrial (Arabidopsis thaliana (Mouse-ear cress)).